A 240-amino-acid polypeptide reads, in one-letter code: Adenylate dimethylallyltransferase (240 aa).

It belongs to the isopentenyl transferase family.

It catalyses the reaction dimethylallyl diphosphate + AMP = N(6)-(dimethylallyl)adenosine 5'-phosphate + diphosphate. Functionally, transfers dimethylallyl groups to AMP as part of the biosynthesis of cytokinin phytohormones. This chain is Adenylate dimethylallyltransferase (izt), found in Agrobacterium fabrum (strain C58 / ATCC 33970) (Agrobacterium tumefaciens (strain C58)).